The chain runs to 301 residues: Ornithine carbamoyltransferase (301 aa).

Residues Arg100 and 127–130 (HPCQ) each bind carbamoyl phosphate. L-ornithine contacts are provided by residues Asn158, Asp221, and 225-226 (SM). 2 residues coordinate carbamoyl phosphate: Cys260 and Arg288.

Belongs to the aspartate/ornithine carbamoyltransferase superfamily. OTCase family. The enzyme is present as a mixture of trimers and dodecamers, with the relative proportions of the two forms depending on the salt concentration. In addition, the trimeric fraction could reassociate into dodecamers when the salt concentration is increased. It appears that in vivo, the main fraction is in the dodecameric form.

It is found in the cytoplasm. It carries out the reaction carbamoyl phosphate + L-ornithine = L-citrulline + phosphate + H(+). Its pathway is amino-acid biosynthesis; L-arginine biosynthesis; L-arginine from L-ornithine and carbamoyl phosphate: step 1/3. With respect to regulation, inhibited by excess of arginine and by the bisubstrate delta-N-phosphonoacetyl-L-ornithine (PALO). Its function is as follows. Reversibly catalyzes the transfer of the carbamoyl group from carbamoyl phosphate (CP) to the N(epsilon) atom of ornithine (ORN) to produce L-citrulline, which is a substrate for argininosuccinate synthetase, the enzyme involved in the final step in arginine biosynthesis. In Moritella abyssi, this protein is Ornithine carbamoyltransferase.